The following is a 130-amino-acid chain: Protein ApaG (130 aa).

Residues 3–127 enclose the ApaG domain; the sequence is RALTRDIEVT…FSLDTPDLRR (125 aa).

The chain is Protein ApaG from Allorhizobium ampelinum (strain ATCC BAA-846 / DSM 112012 / S4) (Agrobacterium vitis (strain S4)).